Consider the following 171-residue polypeptide: ATP synthase subunit b (171 aa).

The helical transmembrane segment at 26 to 48 (LINLAIIIGLLVYAGRGFLGNLL) threads the bilayer.

It belongs to the ATPase B chain family. F-type ATPases have 2 components, F(1) - the catalytic core - and F(0) - the membrane proton channel. F(1) has five subunits: alpha(3), beta(3), gamma(1), delta(1), epsilon(1). F(0) has four main subunits: a(1), b(1), b'(1) and c(10-14). The alpha and beta chains form an alternating ring which encloses part of the gamma chain. F(1) is attached to F(0) by a central stalk formed by the gamma and epsilon chains, while a peripheral stalk is formed by the delta, b and b' chains.

The protein localises to the cellular thylakoid membrane. F(1)F(0) ATP synthase produces ATP from ADP in the presence of a proton or sodium gradient. F-type ATPases consist of two structural domains, F(1) containing the extramembraneous catalytic core and F(0) containing the membrane proton channel, linked together by a central stalk and a peripheral stalk. During catalysis, ATP synthesis in the catalytic domain of F(1) is coupled via a rotary mechanism of the central stalk subunits to proton translocation. Functionally, component of the F(0) channel, it forms part of the peripheral stalk, linking F(1) to F(0). This chain is ATP synthase subunit b, found in Synechococcus elongatus (strain ATCC 33912 / PCC 7942 / FACHB-805) (Anacystis nidulans R2).